We begin with the raw amino-acid sequence, 581 residues long: 2-isopropylmalate synthase (581 aa).

A Pyruvate carboxyltransferase domain is found at 32–306 (PQWCAVDLRD…DPQLDFSDIK (275 aa)). Mg(2+)-binding residues include Asp41, His245, His247, and Asn281. Residues 455–581 (RSAPVEQIAL…KHQQLQNGGV (127 aa)) are regulatory domain.

It belongs to the alpha-IPM synthase/homocitrate synthase family. LeuA type 2 subfamily. In terms of assembly, homodimer. The cofactor is Mg(2+).

The protein localises to the cytoplasm. It catalyses the reaction 3-methyl-2-oxobutanoate + acetyl-CoA + H2O = (2S)-2-isopropylmalate + CoA + H(+). It participates in amino-acid biosynthesis; L-leucine biosynthesis; L-leucine from 3-methyl-2-oxobutanoate: step 1/4. Functionally, catalyzes the condensation of the acetyl group of acetyl-CoA with 3-methyl-2-oxobutanoate (2-ketoisovalerate) to form 3-carboxy-3-hydroxy-4-methylpentanoate (2-isopropylmalate). This is 2-isopropylmalate synthase from Corynebacterium efficiens (strain DSM 44549 / YS-314 / AJ 12310 / JCM 11189 / NBRC 100395).